Reading from the N-terminus, the 598-residue chain is Acetylcholine receptor subunit alpha-type acr-5 (598 aa).

A signal peptide spans M1–C16. Over G17–Y323 the chain is Extracellular. Residues N54, N71, N77, N134, N178, and N252 are each glycosylated (N-linked (GlcNAc...) asparagine). A helical transmembrane segment spans residues Y324 to F344. Residues T345–K356 lie on the Cytoplasmic side of the membrane. The chain crosses the membrane as a helical span at residues L357–Q377. The Extracellular portion of the chain corresponds to M378–Y391. A helical transmembrane segment spans residues Y392 to I412. The Cytoplasmic segment spans residues H413 to R563. The chain crosses the membrane as a helical span at residues I564–D584. The Extracellular portion of the chain corresponds to S585 to M598.

It belongs to the ligand-gated ion channel (TC 1.A.9) family. Acetylcholine receptor (TC 1.A.9.1) subfamily.

The protein resides in the postsynaptic cell membrane. The protein localises to the cell membrane. In terms of biological role, subunit of nicotinic acetylcholine receptor (nAChR). Involved in nAChR sensitivity to nicotine. Modulates locomotion towards the drug nicotine. This chain is Acetylcholine receptor subunit alpha-type acr-5, found in Caenorhabditis elegans.